The chain runs to 225 residues: PKHD-type hydroxylase YbiX (225 aa).

Positions 78–177 (TLSTPLFNRY…RVASFMWIQS (100 aa)) constitute a Fe2OG dioxygenase domain. Residues His-96, Asp-98, and His-158 each coordinate Fe cation. Arg-168 contributes to the 2-oxoglutarate binding site.

It depends on Fe(2+) as a cofactor. The cofactor is L-ascorbate.

The protein is PKHD-type hydroxylase YbiX of Shigella flexneri serotype 5b (strain 8401).